Consider the following 167-residue polypeptide: uncharacterized protein (167 aa).

Basic and acidic residues predominate over residues methionine 1–proline 13. Disordered regions lie at residues methionine 1–arginine 26 and glutamate 67–asparagine 167. Positions serine 71–histidine 80 are enriched in low complexity. Residues valine 102–lysine 156 show a composition bias toward basic and acidic residues.

This is an uncharacterized protein from Saccharomyces cerevisiae (strain ATCC 204508 / S288c) (Baker's yeast).